Consider the following 161-residue polypeptide: SsrA-binding protein (161 aa).

The protein belongs to the SmpB family.

It is found in the cytoplasm. Functionally, required for rescue of stalled ribosomes mediated by trans-translation. Binds to transfer-messenger RNA (tmRNA), required for stable association of tmRNA with ribosomes. tmRNA and SmpB together mimic tRNA shape, replacing the anticodon stem-loop with SmpB. tmRNA is encoded by the ssrA gene; the 2 termini fold to resemble tRNA(Ala) and it encodes a 'tag peptide', a short internal open reading frame. During trans-translation Ala-aminoacylated tmRNA acts like a tRNA, entering the A-site of stalled ribosomes, displacing the stalled mRNA. The ribosome then switches to translate the ORF on the tmRNA; the nascent peptide is terminated with the 'tag peptide' encoded by the tmRNA and targeted for degradation. The ribosome is freed to recommence translation, which seems to be the essential function of trans-translation. This is SsrA-binding protein from Mycolicibacterium smegmatis (strain ATCC 700084 / mc(2)155) (Mycobacterium smegmatis).